Here is a 393-residue protein sequence, read N- to C-terminus: S-adenosylmethionine synthase (393 aa).

Glu-9 is a Mg(2+) binding site. His-15 is an ATP binding site. Glu-43 is a binding site for K(+). Residues Glu-56 and Gln-99 each contribute to the L-methionine site. ATP contacts are provided by residues 167–169 (HGK), 235–238 (SGRF), Asp-246, 252–253 (RK), Ala-269, Lys-273, and Lys-277. Residue Asp-246 participates in L-methionine binding. Position 277 (Lys-277) interacts with L-methionine.

It belongs to the AdoMet synthase family. Homotetramer. Mn(2+) serves as cofactor. The cofactor is Mg(2+). It depends on Co(2+) as a cofactor. K(+) is required as a cofactor. In terms of tissue distribution, root.

It localises to the cytoplasm. The enzyme catalyses L-methionine + ATP + H2O = S-adenosyl-L-methionine + phosphate + diphosphate. The protein operates within amino-acid biosynthesis; S-adenosyl-L-methionine biosynthesis; S-adenosyl-L-methionine from L-methionine: step 1/1. Its function is as follows. Catalyzes the formation of S-adenosylmethionine from methionine and ATP. The reaction comprises two steps that are both catalyzed by the same enzyme: formation of S-adenosylmethionine (AdoMet) and triphosphate, and subsequent hydrolysis of the triphosphate. This chain is S-adenosylmethionine synthase (METK), found in Pinus banksiana (Jack pine).